A 427-amino-acid chain; its full sequence is Trigger factor (427 aa).

The PPIase FKBP-type domain maps to 163–248 (GDTVVIDFVG…IHEVKTKEVP (86 aa)).

The protein belongs to the FKBP-type PPIase family. Tig subfamily.

It localises to the cytoplasm. The enzyme catalyses [protein]-peptidylproline (omega=180) = [protein]-peptidylproline (omega=0). Its function is as follows. Involved in protein export. Acts as a chaperone by maintaining the newly synthesized protein in an open conformation. Functions as a peptidyl-prolyl cis-trans isomerase. This Streptococcus pyogenes serotype M49 (strain NZ131) protein is Trigger factor.